We begin with the raw amino-acid sequence, 279 residues long: NAD kinase (279 aa).

The active-site Proton acceptor is the Asp61. NAD(+) contacts are provided by residues 61–62 (DG), 138–139 (ND), Lys149, Lys166, Asp168, and 179–184 (TGYSFS).

It belongs to the NAD kinase family. The cofactor is a divalent metal cation.

The protein resides in the cytoplasm. The enzyme catalyses NAD(+) + ATP = ADP + NADP(+) + H(+). Involved in the regulation of the intracellular balance of NAD and NADP, and is a key enzyme in the biosynthesis of NADP. Catalyzes specifically the phosphorylation on 2'-hydroxyl of the adenosine moiety of NAD to yield NADP. The chain is NAD kinase from Borrelia garinii subsp. bavariensis (strain ATCC BAA-2496 / DSM 23469 / PBi) (Borreliella bavariensis).